The sequence spans 257 residues: Diacetyl reductase [(S)-acetoin forming] (257 aa).

Residue 6-30 coordinates NAD(+); sequence IITGSAGGLGKGIAERLANDGFNIV. A substrate-binding site is contributed by Ser-139. Residue Tyr-152 is the Proton acceptor of the active site. Lys-156 is a catalytic residue.

This sequence belongs to the short-chain dehydrogenases/reductases (SDR) family.

It carries out the reaction (S)-acetoin + NAD(+) = diacetyl + NADH + H(+). Its function is as follows. Catalyzes the irreversible reduction of 2,3-butanediol to (S)-acetoin in the presence of NADH. This is Diacetyl reductase [(S)-acetoin forming] (butA) from Staphylococcus epidermidis (strain ATCC 35984 / DSM 28319 / BCRC 17069 / CCUG 31568 / BM 3577 / RP62A).